The primary structure comprises 383 residues: Cell division protein FtsZ (383 aa).

GTP contacts are provided by residues 20-24 (GGGGN), 107-109 (GTG), Glu-138, Arg-142, and Asn-186.

This sequence belongs to the FtsZ family. Homodimer. Polymerizes to form a dynamic ring structure in a strictly GTP-dependent manner. Interacts directly with several other division proteins.

The protein localises to the cytoplasm. Essential cell division protein that forms a contractile ring structure (Z ring) at the future cell division site. The regulation of the ring assembly controls the timing and the location of cell division. One of the functions of the FtsZ ring is to recruit other cell division proteins to the septum to produce a new cell wall between the dividing cells. Binds GTP and shows GTPase activity. This is Cell division protein FtsZ from Escherichia coli O157:H7.